A 192-amino-acid chain; its full sequence is Ribosome maturation factor RimM (192 aa).

The region spanning 99–186 (ADEYHVSELV…RIEIAPPPGL (88 aa)) is the PRC barrel domain.

It belongs to the RimM family. Binds ribosomal protein uS19.

It localises to the cytoplasm. In terms of biological role, an accessory protein needed during the final step in the assembly of 30S ribosomal subunit, possibly for assembly of the head region. Essential for efficient processing of 16S rRNA. May be needed both before and after RbfA during the maturation of 16S rRNA. It has affinity for free ribosomal 30S subunits but not for 70S ribosomes. The protein is Ribosome maturation factor RimM of Microcystis aeruginosa (strain NIES-843 / IAM M-2473).